Here is a 339-residue protein sequence, read N- to C-terminus: GTP 3',8-cyclase (339 aa).

A Radical SAM core domain is found at 20 to 241; the sequence is NFDRKFEYLR…WTQKQSLSHD (222 aa). Residue Arg29 participates in GTP binding. Cys36 and Cys40 together coordinate [4Fe-4S] cluster. An S-adenosyl-L-methionine-binding site is contributed by Tyr42. Residue Cys43 participates in [4Fe-4S] cluster binding. A GTP-binding site is contributed by Arg78. Gly82 provides a ligand contact to S-adenosyl-L-methionine. Thr109 contributes to the GTP binding site. Ser133 contributes to the S-adenosyl-L-methionine binding site. Lys170 provides a ligand contact to GTP. S-adenosyl-L-methionine is bound at residue Met204. [4Fe-4S] cluster contacts are provided by Cys267 and Cys270. 272–274 provides a ligand contact to GTP; that stretch reads RLR. Position 284 (Cys284) interacts with [4Fe-4S] cluster.

This sequence belongs to the radical SAM superfamily. MoaA family. As to quaternary structure, monomer and homodimer. The cofactor is [4Fe-4S] cluster.

The catalysed reaction is GTP + AH2 + S-adenosyl-L-methionine = (8S)-3',8-cyclo-7,8-dihydroguanosine 5'-triphosphate + 5'-deoxyadenosine + L-methionine + A + H(+). The protein operates within cofactor biosynthesis; molybdopterin biosynthesis. Its function is as follows. Catalyzes the cyclization of GTP to (8S)-3',8-cyclo-7,8-dihydroguanosine 5'-triphosphate. This is GTP 3',8-cyclase from Psychromonas ingrahamii (strain DSM 17664 / CCUG 51855 / 37).